The primary structure comprises 103 residues: Flagellar hook-basal body complex protein FliE (103 aa).

The protein belongs to the FliE family.

The protein localises to the bacterial flagellum basal body. The sequence is that of Flagellar hook-basal body complex protein FliE from Helicobacter hepaticus (strain ATCC 51449 / 3B1).